A 431-amino-acid polypeptide reads, in one-letter code: Glutamate-1-semialdehyde 2,1-aminomutase 1 (431 aa).

An N6-(pyridoxal phosphate)lysine modification is found at lysine 268.

This sequence belongs to the class-III pyridoxal-phosphate-dependent aminotransferase family. HemL subfamily. Homodimer. Requires pyridoxal 5'-phosphate as cofactor.

It is found in the cytoplasm. The catalysed reaction is (S)-4-amino-5-oxopentanoate = 5-aminolevulinate. It functions in the pathway porphyrin-containing compound metabolism; protoporphyrin-IX biosynthesis; 5-aminolevulinate from L-glutamyl-tRNA(Glu): step 2/2. This is Glutamate-1-semialdehyde 2,1-aminomutase 1 from Anoxybacillus flavithermus (strain DSM 21510 / WK1).